A 129-amino-acid polypeptide reads, in one-letter code: Large ribosomal subunit protein uL22 (129 aa).

It belongs to the universal ribosomal protein uL22 family. As to quaternary structure, part of the 50S ribosomal subunit.

Its function is as follows. This protein binds specifically to 23S rRNA; its binding is stimulated by other ribosomal proteins, e.g. L4, L17, and L20. It is important during the early stages of 50S assembly. It makes multiple contacts with different domains of the 23S rRNA in the assembled 50S subunit and ribosome. The globular domain of the protein is located near the polypeptide exit tunnel on the outside of the subunit, while an extended beta-hairpin is found that lines the wall of the exit tunnel in the center of the 70S ribosome. This chain is Large ribosomal subunit protein uL22, found in Mesorhizobium japonicum (strain LMG 29417 / CECT 9101 / MAFF 303099) (Mesorhizobium loti (strain MAFF 303099)).